Here is a 115-residue protein sequence, read N- to C-terminus: MKFVLLFGVLLVTLFSYSSAEMLDDFDQAVEDELLSLIEKEEARAKECTPRFYDCSHDRHSCCRSELFKDVCTCFYPEGGDNEVCTCQQPKHLKYMEKAADKAKKFGGKIKKWFG.

An N-terminal signal peptide occupies residues 1-20; sequence MKFVLLFGVLLVTLFSYSSA. The propeptide occupies 21–44; the sequence is EMLDDFDQAVEDELLSLIEKEEAR. Cystine bridges form between Cys-48–Cys-63, Cys-55–Cys-72, Cys-62–Cys-87, and Cys-74–Cys-85.

It belongs to the neurotoxin 19 (CSTX) family. 01 subfamily. In terms of tissue distribution, expressed by the venom gland.

The protein localises to the secreted. This chain is U3-lycotoxin-Ls1a, found in Lycosa singoriensis (Wolf spider).